The sequence spans 408 residues: tRNA-specific 2-thiouridylase MnmA (408 aa).

ATP contacts are provided by residues 38–45 and Met-64; that span reads GMSGGVDS. The tract at residues 124–126 is interaction with target base in tRNA; it reads NPD. Cys-129 (nucleophile) is an active-site residue. An intrachain disulfide couples Cys-129 to Cys-231. Gly-153 contributes to the ATP binding site. The segment at 181–183 is interaction with tRNA; the sequence is KDQ. Cys-231 functions as the Cysteine persulfide intermediate in the catalytic mechanism. The interval 348–349 is interaction with tRNA; the sequence is RY.

This sequence belongs to the MnmA/TRMU family.

Its subcellular location is the cytoplasm. It catalyses the reaction S-sulfanyl-L-cysteinyl-[protein] + uridine(34) in tRNA + AH2 + ATP = 2-thiouridine(34) in tRNA + L-cysteinyl-[protein] + A + AMP + diphosphate + H(+). In terms of biological role, catalyzes the 2-thiolation of uridine at the wobble position (U34) of tRNA, leading to the formation of s(2)U34. The protein is tRNA-specific 2-thiouridylase MnmA of Psychrobacter cryohalolentis (strain ATCC BAA-1226 / DSM 17306 / VKM B-2378 / K5).